The following is a 98-amino-acid chain: Post-transcriptional regulator ComN (98 aa).

Interacts directly with DivIVA.

It localises to the cytoplasm. Required for post-transcription initiation control of the comE operon. Promotes the accumulation of its target comE mRNA to septal and polar sites. The chain is Post-transcriptional regulator ComN (comN) from Bacillus subtilis (strain 168).